Consider the following 233-residue polypeptide: MLTHANWQEPNINFQVDEMYRGALEVLRWSYQEYGNEIVYACSFGIEGIVLIDLISKVKPNATIVFLDTDVHFKETYETIRRVKEKYPQLNIVMKKSALTLEQQAAQYGEELWKSDPNQCCAIRKIKPLHEALSGTKAWISGLRREQSPTRQQTNFLNRDDKFKSIKVCPLIHWTWKDVWRYVSKNNLPYNPLHDQGYPSIGCEHCTKPAFTMDDLRSGRWQGSGKTECGLHE.

[4Fe-4S] cluster-binding residues include Cys-120, Cys-121, Cys-203, and Cys-206. Cys-229 serves as the catalytic Nucleophile; cysteine thiosulfonate intermediate.

This sequence belongs to the PAPS reductase family. CysH subfamily. [4Fe-4S] cluster serves as cofactor.

It is found in the cytoplasm. The enzyme catalyses [thioredoxin]-disulfide + sulfite + AMP + 2 H(+) = adenosine 5'-phosphosulfate + [thioredoxin]-dithiol. It participates in sulfur metabolism; hydrogen sulfide biosynthesis; sulfite from sulfate. Catalyzes the formation of sulfite from adenosine 5'-phosphosulfate (APS) using thioredoxin as an electron donor. The chain is Adenosine 5'-phosphosulfate reductase from Lysinibacillus sphaericus (strain C3-41).